A 326-amino-acid chain; its full sequence is tRNA-modifying protein YgfZ (326 aa).

Folate is bound by residues Trp27 and Trp189.

This sequence belongs to the tRNA-modifying YgfZ family.

The protein localises to the cytoplasm. Its function is as follows. Folate-binding protein involved in regulating the level of ATP-DnaA and in the modification of some tRNAs. It is probably a key factor in regulatory networks that act via tRNA modification, such as initiation of chromosomal replication. This is tRNA-modifying protein YgfZ from Enterobacter sp. (strain 638).